A 466-amino-acid chain; its full sequence is Ribulose bisphosphate carboxylase large chain (466 aa).

Lys5 is modified (N6,N6,N6-trimethyllysine). 2 residues coordinate substrate: Asn114 and Thr164. Residue Lys166 is the Proton acceptor of the active site. Lys168 provides a ligand contact to substrate. Lys192, Asp194, and Glu195 together coordinate Mg(2+). The residue at position 192 (Lys192) is an N6-carboxylysine. The active-site Proton acceptor is the His285. Substrate is bound by residues Arg286, His318, and Ser370.

The protein belongs to the RuBisCO large chain family. Type I subfamily. In terms of assembly, heterohexadecamer of 8 large chains and 8 small chains; disulfide-linked. The disulfide link is formed within the large subunit homodimers. It depends on Mg(2+) as a cofactor. The disulfide bond which can form in the large chain dimeric partners within the hexadecamer appears to be associated with oxidative stress and protein turnover.

It is found in the plastid. The protein localises to the chloroplast. The enzyme catalyses 2 (2R)-3-phosphoglycerate + 2 H(+) = D-ribulose 1,5-bisphosphate + CO2 + H2O. The catalysed reaction is D-ribulose 1,5-bisphosphate + O2 = 2-phosphoglycolate + (2R)-3-phosphoglycerate + 2 H(+). In terms of biological role, ruBisCO catalyzes two reactions: the carboxylation of D-ribulose 1,5-bisphosphate, the primary event in carbon dioxide fixation, as well as the oxidative fragmentation of the pentose substrate in the photorespiration process. Both reactions occur simultaneously and in competition at the same active site. This Berzelia lanuginosa (Buttonbush) protein is Ribulose bisphosphate carboxylase large chain.